Here is a 70-residue protein sequence, read N- to C-terminus: Exodeoxyribonuclease 7 small subunit (70 aa).

Belongs to the XseB family. In terms of assembly, heterooligomer composed of large and small subunits.

The protein localises to the cytoplasm. It carries out the reaction Exonucleolytic cleavage in either 5'- to 3'- or 3'- to 5'-direction to yield nucleoside 5'-phosphates.. In terms of biological role, bidirectionally degrades single-stranded DNA into large acid-insoluble oligonucleotides, which are then degraded further into small acid-soluble oligonucleotides. This chain is Exodeoxyribonuclease 7 small subunit, found in Streptococcus gordonii (strain Challis / ATCC 35105 / BCRC 15272 / CH1 / DL1 / V288).